Consider the following 477-residue polypeptide: Probable glycine dehydrogenase (decarboxylating) subunit 2 (477 aa).

An N6-(pyridoxal phosphate)lysine modification is found at lysine 264.

The protein belongs to the GcvP family. C-terminal subunit subfamily. In terms of assembly, the glycine cleavage system is composed of four proteins: P, T, L and H. In this organism, the P 'protein' is a heterodimer of two subunits. Pyridoxal 5'-phosphate is required as a cofactor.

It catalyses the reaction N(6)-[(R)-lipoyl]-L-lysyl-[glycine-cleavage complex H protein] + glycine + H(+) = N(6)-[(R)-S(8)-aminomethyldihydrolipoyl]-L-lysyl-[glycine-cleavage complex H protein] + CO2. Functionally, the glycine cleavage system catalyzes the degradation of glycine. The P protein binds the alpha-amino group of glycine through its pyridoxal phosphate cofactor; CO(2) is released and the remaining methylamine moiety is then transferred to the lipoamide cofactor of the H protein. This is Probable glycine dehydrogenase (decarboxylating) subunit 2 from Fervidobacterium nodosum (strain ATCC 35602 / DSM 5306 / Rt17-B1).